Reading from the N-terminus, the 61-residue chain is Small ribosomal subunit protein uS14 (61 aa).

Residues C24, C27, C40, and C43 each contribute to the Zn(2+) site.

The protein belongs to the universal ribosomal protein uS14 family. Zinc-binding uS14 subfamily. In terms of assembly, part of the 30S ribosomal subunit. Contacts proteins S3 and S10. It depends on Zn(2+) as a cofactor.

Functionally, binds 16S rRNA, required for the assembly of 30S particles and may also be responsible for determining the conformation of the 16S rRNA at the A site. This is Small ribosomal subunit protein uS14 from Desulfitobacterium hafniense (strain Y51).